A 629-amino-acid chain; its full sequence is Chaperone protein HtpG (629 aa).

The interval 1 to 335 (MSSNPTSSVR…TEDLPLNVSR (335 aa)) is a; substrate-binding. Residues 336–547 (ELVQASPVMA…KDALDSQFEK (212 aa)) form a b region. A c region spans residues 548-629 (MMKMMNKDAD…NELVEAATRS (82 aa)).

The protein belongs to the heat shock protein 90 family. In terms of assembly, homodimer.

It localises to the cytoplasm. Its function is as follows. Molecular chaperone. Has ATPase activity. This is Chaperone protein HtpG from Chlorobaculum tepidum (strain ATCC 49652 / DSM 12025 / NBRC 103806 / TLS) (Chlorobium tepidum).